Reading from the N-terminus, the 277-residue chain is Shikimate dehydrogenase (NADP(+)) (277 aa).

Shikimate is bound by residues serine 15–serine 17 and threonine 64. Lysine 68 (proton acceptor) is an active-site residue. Positions 89 and 104 each coordinate shikimate. Residues glycine 129–alanine 133, asparagine 153–arginine 158, and methionine 217 each bind NADP(+). Tyrosine 219 is a shikimate binding site. Residue glycine 242 coordinates NADP(+).

It belongs to the shikimate dehydrogenase family. As to quaternary structure, homodimer.

The enzyme catalyses shikimate + NADP(+) = 3-dehydroshikimate + NADPH + H(+). It functions in the pathway metabolic intermediate biosynthesis; chorismate biosynthesis; chorismate from D-erythrose 4-phosphate and phosphoenolpyruvate: step 4/7. Involved in the biosynthesis of the chorismate, which leads to the biosynthesis of aromatic amino acids. Catalyzes the reversible NADPH linked reduction of 3-dehydroshikimate (DHSA) to yield shikimate (SA). The sequence is that of Shikimate dehydrogenase (NADP(+)) from Hydrogenovibrio crunogenus (strain DSM 25203 / XCL-2) (Thiomicrospira crunogena).